The following is a 132-amino-acid chain: Lectin OAA (132 aa).

2 consecutive repeat copies span residues alanine 1–glycine 66 and asparagine 67–leucine 132. Residues alanine 1 to leucine 132 are 2 X approximate tandem repeats.

Monomer.

In terms of biological role, lectin specific for high mannose N-glycans, recognizes the branched moiety of these glycans. Does not recognize other types of N-glycans or monosaccharides. Agglutinates trypsin-treated rabbit erythrocytes. Does not require divalent cations for activity. Inhibits HIV replication in MT4 cells with an EC(50) of 45 nM. Binds to the HIV envelope glycoprotein gp120. The protein is Lectin OAA of Planktothrix agardhii (Oscillatoria agardhii).